The sequence spans 188 residues: Photosystem I assembly protein Ycf4 (188 aa).

Transmembrane regions (helical) follow at residues 26–48 (FFWAGISTIGGVGFLLAGLSSYF) and 63–85 (FIPQGVALLFYGVAGSTVAGYLW).

This sequence belongs to the Ycf4 family.

The protein localises to the cellular thylakoid membrane. In terms of biological role, seems to be required for the assembly of the photosystem I complex. The protein is Photosystem I assembly protein Ycf4 of Synechocystis sp. (strain ATCC 27184 / PCC 6803 / Kazusa).